The following is a 309-amino-acid chain: Homoserine kinase (309 aa).

An ATP-binding site is contributed by 95 to 105; the sequence is PHGRGLGSSSA.

This sequence belongs to the GHMP kinase family. Homoserine kinase subfamily.

Its subcellular location is the cytoplasm. It carries out the reaction L-homoserine + ATP = O-phospho-L-homoserine + ADP + H(+). The protein operates within amino-acid biosynthesis; L-threonine biosynthesis; L-threonine from L-aspartate: step 4/5. In terms of biological role, catalyzes the ATP-dependent phosphorylation of L-homoserine to L-homoserine phosphate. This is Homoserine kinase from Streptomyces coelicolor (strain ATCC BAA-471 / A3(2) / M145).